Consider the following 673-residue polypeptide: Polyunsaturated fatty acid 5-lipoxygenase (673 aa).

Residues 2–117 enclose the PLAT domain; that stretch reads PSYTVTVATG…EIVLRDGRAK (116 aa). Ca(2+) contacts are provided by Gly-17, Thr-18, Asp-19, Asn-44, Asp-45, Glu-47, Asp-79, and Asp-80. In terms of domain architecture, Lipoxygenase spans 118–673; the sequence is LARDDQIHIL…PDRIPNSVAI (556 aa). Ser-271 is modified (phosphoserine). Fe cation-binding residues include His-367 and His-372. Ser-523 is subject to Phosphoserine. Residues His-550, Asn-554, and Ile-673 each coordinate Fe cation.

This sequence belongs to the lipoxygenase family. Homodimer. Interacts with ALOX5AP and LTC4S. Interacts with COTL1, the interaction is required for stability and efficient catalytic activity. Interacts with PIK3R1; this interaction bridges ALOX5 with CD40 after CD40 ligation in B cells and leads to the production of reactive oxygen species (ROS). Interacts (via PLAT domain) with DICER1 (via Dicer dsRNA-binding fold domain); this interaction enhances arachidonate 5-lipoxygenase activity and modifies the miRNA precursor processing activity of DICER1. Fe cation is required as a cofactor. In terms of processing, serine phosphorylation by MAPKAPK2 is stimulated by arachidonic acid. Phosphorylation on Ser-523 by PKA has an inhibitory effect. Phosphorylation on Ser-271 prevents export from the nucleus. Phosphorylation at Ser-523 is stimulated by 8-bromo-3',5'-cyclic AMP or prostaglandin E2.

It localises to the cytoplasm. The protein localises to the nucleus matrix. It is found in the nucleus membrane. Its subcellular location is the perinuclear region. The protein resides in the cytosol. It localises to the nucleus envelope. The protein localises to the nucleus intermembrane space. It carries out the reaction (5Z,8Z,11Z,14Z)-eicosatetraenoate + O2 = leukotriene A4 + H2O. It catalyses the reaction 18-HEPE + O2 = (5S)-hydroperoxy-18-hydroxy-(7E,9E,11Z,14Z,16E)-eicosapentaenoate. The enzyme catalyses (18R)-hydroxy-(5Z,8Z,11Z,14Z,16E)-eicosapentaenoate + O2 = (5S)-hydroperoxy-(18R)-hydroxy-(6E,8Z,11Z,14Z,16E)-eicosapentaenoate. The catalysed reaction is (18S)-hydroxy-(5Z,8Z,11Z,14Z,16E)-eicosapentaenoate + O2 = (5S)-hydroperoxy-(18S)-hydroxy-(6E,8Z,11Z,14Z,16E)-eicosapentaenoate. It carries out the reaction (5S)-hydroperoxy-(18S)-hydroxy-(6E,8Z,11Z,14Z,16E)-eicosapentaenoate = (5S,6S)-epoxy-(18S)-hydroxy-(7E,9E,11Z,14Z,16E)-eicosapentaenoate + H2O. It catalyses the reaction (5S)-hydroperoxy-(18R)-hydroxy-(6E,8Z,11Z,14Z,16E)-eicosapentaenoate = (5S,6S)-epoxy-(18R)-hydroxy-(7E,9E,11Z,14Z,16E)-eicosapentaenoate + H2O. The enzyme catalyses (5S)-hydroperoxy-18-hydroxy-(7E,9E,11Z,14Z,16E)-eicosapentaenoate = (5S,6S)-epoxy-18-hydroxy-(7E,9E,11Z,14Z,16E)-eicosapentaenoate + H2O. The catalysed reaction is (5Z,8Z,11Z,14Z)-eicosatetraenoate + O2 = (5S)-hydroperoxy-(6E,8Z,11Z,14Z)-eicosatetraenoate. It carries out the reaction (15S)-hydroxy-(5Z,8Z,11Z,13E)-eicosatetraenoate + O2 = (5S)-hydroperoxy-(15S)-hydroxy-(6E,8Z,11Z,13E)-eicosatetraenoate. It catalyses the reaction (5S)-hydroperoxy-(6E,8Z,11Z,14Z)-eicosatetraenoate = leukotriene A4 + H2O. The enzyme catalyses (5Z,8Z,11Z,14Z)-eicosatetraenoate + O2 = (8S)-hydroperoxy-(5Z,9E,11Z,14Z)-eicosatetraenoate. The catalysed reaction is (5Z,8Z,11Z,14Z)-eicosatetraenoate + O2 = (12S)-hydroperoxy-(5Z,8Z,10E,14Z)-eicosatetraenoate. It carries out the reaction (5Z,8Z)-eicosadienoate + O2 = (5S)-hydroperoxy-(6E,8Z)-eicosadienoate. It catalyses the reaction (12S)-hydroxy-(5Z,8Z,10E,14Z)-eicosatetraenoate + O2 = (5S)-hydroperoxy-(12S)-hydroxy-(6E,8Z,10E,14Z)-eicosatetraenoate. The enzyme catalyses (5Z,8Z,11Z,14Z,17Z)-eicosapentaenoate + O2 = 5-hydroperoxy-(6E,8Z,11Z,14Z,17Z)-eicosapentaenoate. The catalysed reaction is (4Z,7Z,10Z,13Z,16Z,19Z)-docosahexaenoate + O2 = (14S)-hydroperoxy-(4Z,7Z,10Z,12E,16Z,19Z)-docosahexaenoate. It carries out the reaction (4Z,7Z,10Z,13Z,16Z,19Z)-docosahexaenoate + O2 = (7S)-hydroperoxy-(4Z,8E,10Z,13Z,16Z,19Z)-docosahexaenoate. It catalyses the reaction (4Z,7Z,10Z,13Z,16Z,19Z)-docosahexaenoate + O2 = (17S)-hydroperoxy-(4Z,7Z,10Z,13Z,15E,19Z)-docosahexaenoate. It functions in the pathway lipid metabolism; leukotriene A4 biosynthesis. Catalyzes the oxygenation of arachidonate to 5-hydroperoxyeicosatetraenoate (5-HPETE) followed by the dehydration to 5,6- epoxyeicosatetraenoate (Leukotriene A4/LTA4), the first two steps in the biosynthesis of leukotrienes, which are potent mediators of inflammation. Also catalyzes the oxygenation of arachidonate into 8-hydroperoxyicosatetraenoate (8-HPETE) and 12-hydroperoxyicosatetraenoate (12-HPETE). Displays lipoxin synthase activity being able to convert (15S)-HETE into a conjugate tetraene. Although arachidonate is the preferred substrate, this enzyme can also metabolize oxidized fatty acids derived from arachidonate such as (15S)-HETE, eicosapentaenoate (EPA) such as (18R)- and (18S)-HEPE or docosahexaenoate (DHA) which lead to the formation of specialized pro-resolving mediators (SPM) lipoxin and resolvins E and D respectively, therefore it participates in anti-inflammatory responses. Oxidation of DHA directly inhibits endothelial cell proliferation and sprouting angiogenesis via peroxisome proliferator-activated receptor gamma (PPARgamma). It does not catalyze the oxygenation of linoleic acid and does not convert (5S)-HETE to lipoxin isomers. In addition to inflammatory processes, it participates in dendritic cell migration, wound healing through an antioxidant mechanism based on heme oxygenase-1 (HO-1) regulation expression, monocyte adhesion to the endothelium via ITGAM expression on monocytes. Moreover, it helps establish an adaptive humoral immunity by regulating primary resting B cells and follicular helper T cells and participates in the CD40-induced production of reactive oxygen species (ROS) after CD40 ligation in B cells through interaction with PIK3R1 that bridges ALOX5 with CD40. May also play a role in glucose homeostasis, regulation of insulin secretion and palmitic acid-induced insulin resistance via AMPK. Can regulate bone mineralization and fat cell differentiation increases in induced pluripotent stem cells. The polypeptide is Polyunsaturated fatty acid 5-lipoxygenase (Mesocricetus auratus (Golden hamster)).